The primary structure comprises 102 residues: Ferredoxin (102 aa).

2 4Fe-4S ferredoxin-type domains span residues 45–73 (VSVN…ELVE) and 74–102 (TWIE…EVMK). Residues Cys54, Cys57, Cys60, Cys64, Cys83, Cys86, Cys89, and Cys93 each contribute to the [4Fe-4S] cluster site.

[4Fe-4S] cluster serves as cofactor.

Its pathway is membrane lipid metabolism; glycerophospholipid metabolism. Ferredoxin that is the specific electron donor for the geranylgeranyl reductase GGR involved in the biosynthesis of archaeal membrane lipids. The chain is Ferredoxin from Methanosarcina acetivorans (strain ATCC 35395 / DSM 2834 / JCM 12185 / C2A).